A 280-amino-acid polypeptide reads, in one-letter code: Threonylcarbamoyl-AMP synthase (280 aa).

The N-terminal 56 residues, 1 to 56 (MSTARPCAGLRAAVAAGMGLSDGPAGSSRGCRLLRPPAPAPALPGARLLRLPESEA), are a transit peptide targeting the mitochondrion. At Ser-61 the chain carries Phosphoserine. The 191-residue stretch at 68–258 (TEALRAAVAE…KFGIIRSGCA (191 aa)) folds into the YrdC-like domain.

This sequence belongs to the SUA5 family. Interacts with RSC1A1.

It localises to the cytoplasm. The protein localises to the mitochondrion. The protein resides in the cell membrane. It carries out the reaction L-threonine + hydrogencarbonate + ATP = L-threonylcarbamoyladenylate + diphosphate + H2O. Cytoplasmic and mitochondrial threonylcarbamoyl-AMP synthase required for the formation of a threonylcarbamoyl group on adenosine at position 37 (t(6)A37) in tRNAs that read codons beginning with adenine. Catalyzes the conversion of L-threonine, HCO(3)(-)/CO(2) and ATP to give threonylcarbamoyl-AMP (TC-AMP) as the acyladenylate intermediate, with the release of diphosphate. Participates in t(6)A37 formation in cytoplasmic and mitochondrial tRNAs. May regulate the activity of some transporters. This chain is Threonylcarbamoyl-AMP synthase, found in Rattus norvegicus (Rat).